The sequence spans 181 residues: GTP cyclohydrolase 1 2 (181 aa).

It belongs to the GTP cyclohydrolase I family. Homomer.

The catalysed reaction is GTP + H2O = 7,8-dihydroneopterin 3'-triphosphate + formate + H(+). The protein operates within cofactor biosynthesis; 7,8-dihydroneopterin triphosphate biosynthesis; 7,8-dihydroneopterin triphosphate from GTP: step 1/1. The protein is GTP cyclohydrolase 1 2 (folE2) of Pseudomonas aeruginosa (strain ATCC 15692 / DSM 22644 / CIP 104116 / JCM 14847 / LMG 12228 / 1C / PRS 101 / PAO1).